Here is a 612-residue protein sequence, read N- to C-terminus: Transcription factor unc-37 (612 aa).

Positions 143–228 (FASPHVNGGD…SNSRARQQQQ (86 aa)) are disordered. A compositionally biased stretch (gly residues) spans 150-159 (GGDGAGGSSG). The tract at residues 153 to 196 (GAGGSSGGASEAKKAKLEDPDDGELEIDVTNDDHPSTASNGGAA) is CCN domain. A compositionally biased stretch (acidic residues) spans 171–182 (DPDDGELEIDVT). The segment covering 202–221 (DSTNSVASSGASTPSIASNS) has biased composition (polar residues). 6 WD repeats span residues 308–339 (GIPT…RVYT), 372–402 (LKEN…ALWD), 414–444 (TDSQ…LIYD), 456–486 (GHQD…RCWD), 538–568 (QHES…NAWR), and 579–609 (KENS…TLYA).

It belongs to the WD repeat Groucho/TLE family. Interacts with unc-4. Interacts with ref-1. May interact with mls-1.

Its subcellular location is the nucleus. Functionally, transcriptional corepressor that functions with the neural specificity gene unc-4 to govern motor neuron identity. In concert with unc-4, represses the expression of VB-specific genes such as ceh-12, thereby preventing the adoption of VB motor neuron fate. May function with transcription factor mls-1 to promote uterine muscle specification and formation. The protein is Transcription factor unc-37 (unc-37) of Caenorhabditis elegans.